Here is a 1737-residue protein sequence, read N- to C-terminus: Myosin-M heavy chain (1737 aa).

The 52-residue stretch at L4 to Q55 folds into the Myosin N-terminal SH3-like domain. The Myosin motor domain occupies K59–Y886. G154–T161 is an ATP binding site. Residues K640–S727 are disordered. 2 stretches are compositionally biased toward low complexity: residues S641–S663 and N679–N724. Positions Y754–N761 are actin-binding. IQ domains follow at residues L889–F918 and N912–K941. Positions Q926 to L1039 form a coiled coil. Residues R947–K1028 are compositionally biased toward basic and acidic residues. Disordered stretches follow at residues R947–K1099, L1117–N1199, G1266–S1290, and S1304–D1364. The span at I1044–P1070 shows a compositional bias: low complexity. Positions P1071–S1081 are enriched in pro residues. Over residues T1082 to T1098 the composition is skewed to low complexity. Over residues S1121–N1131 the composition is skewed to basic and acidic residues. The span at N1132 to S1141 shows a compositional bias: low complexity. A compositionally biased stretch (polar residues) spans I1143–Q1153. Positions P1162–K1171 are enriched in pro residues. Composition is skewed to polar residues over residues G1180 to F1198 and R1274 to N1288. The span at S1304–S1359 shows a compositional bias: low complexity. The region spanning F1389–A1572 is the DH domain. The 112-residue stretch at T1603–Q1714 folds into the PH domain.

Belongs to the TRAFAC class myosin-kinesin ATPase superfamily. Myosin family. In terms of assembly, monomer.

Its subcellular location is the cytoplasm. In terms of biological role, myosins are actin-based motor molecules with ATPase activity. Involved in macropinocytosis and remodeling of actin cytoskeleton. The polypeptide is Myosin-M heavy chain (myoM) (Dictyostelium discoideum (Social amoeba)).